A 295-amino-acid polypeptide reads, in one-letter code: Small ribosomal subunit protein uS2B (295 aa).

At S2 the chain carries N-acetylserine. The interval 54 to 113 (TWEKLLLAARAIVAIENPADVSVISSRNTGQRAVLKFAAATGATPIAGRFTPGTFTNQIQ) is interaction with PPP1R16B. Laminin-binding regions lie at residues 161-180 (IPCN…MLAR) and 205-229 (RDPE…EFQG). Residues 218–227 (AEKAVTKEEF) are compositionally biased toward basic and acidic residues. A disordered region spans residues 218–242 (AEKAVTKEEFQGEWTAPSPEFTATQ). [DE]-W-[ST] repeat units lie at residues 230–232 (EWT), 247–249 (DWS), 266–268 (DWS), 275–277 (DWS), and 293–295 (DWS). The interval 242-295 (QPEVADWSEGVQVPSVPIQQFPTEDWSAQPATEDWSAAPTAQATEWVGATTDWS) is laminin-binding. The interval 266-295 (DWSAQPATEDWSAAPTAQATEWVGATTDWS) is disordered.

The protein belongs to the universal ribosomal protein uS2 family. Monomer (37LRP) and homodimer (67LR). Component of the small ribosomal subunit. Mature ribosomes consist of a small (40S) and a large (60S) subunit. The 40S subunit contains about 33 different proteins and 1 molecule of RNA (18S). The 60S subunit contains about 49 different proteins and 3 molecules of RNA (28S, 5.8S and 5S). Interacts with RPS21. Interacts with several laminins including at least LAMB1. Interacts with MDK. The mature dimeric form interacts with PPP1R16B (via its fourth ankyrin repeat). Interacts with PPP1CA only in the presence of PPP1R16B. In terms of processing, acylated. Acylation may be a prerequisite for conversion of the monomeric 37 kDa laminin receptor precursor (37LRP) to the mature dimeric 67 kDa laminin receptor (67LR), and may provide a mechanism for membrane association. Post-translationally, cleaved by stromelysin-3 (ST3) at the cell surface. Cleavage by stromelysin-3 may be a mechanism to alter cell-extracellular matrix interactions.

It localises to the cell membrane. The protein resides in the cytoplasm. The protein localises to the nucleus. Functionally, required for the assembly and/or stability of the 40S ribosomal subunit. Required for the processing of the 20S rRNA-precursor to mature 18S rRNA in a late step of the maturation of 40S ribosomal subunits. Also functions as a cell surface receptor for laminin. Plays a role in cell adhesion to the basement membrane and in the consequent activation of signaling transduction pathways. May play a role in cell fate determination and tissue morphogenesis. Also acts as a receptor for several other ligands, including the pathogenic prion protein, viruses, and bacteria. Acts as a PPP1R16B-dependent substrate of PPP1CA. This is Small ribosomal subunit protein uS2B from Homo sapiens (Human).